Consider the following 360-residue polypeptide: DNA replication and repair protein RecF (360 aa).

30 to 37 (GDNAQGKT) serves as a coordination point for ATP.

This sequence belongs to the RecF family.

It localises to the cytoplasm. The RecF protein is involved in DNA metabolism; it is required for DNA replication and normal SOS inducibility. RecF binds preferentially to single-stranded, linear DNA. It also seems to bind ATP. The protein is DNA replication and repair protein RecF of Lachnoclostridium phytofermentans (strain ATCC 700394 / DSM 18823 / ISDg) (Clostridium phytofermentans).